The primary structure comprises 210 residues: Na(+)-translocating NADH-quinone reductase subunit D (210 aa).

A run of 6 helical transmembrane segments spans residues 11–31, 42–62, 70–90, 103–123, 131–151, and 178–198; these read ILAP…VCSA, FVMT…VSLI, VRII…DQIL, VFVG…AFAM, FIDG…VGFF, and NGLM…IWAI.

This sequence belongs to the NqrDE/RnfAE family. As to quaternary structure, composed of six subunits; NqrA, NqrB, NqrC, NqrD, NqrE and NqrF.

Its subcellular location is the cell inner membrane. The catalysed reaction is a ubiquinone + n Na(+)(in) + NADH + H(+) = a ubiquinol + n Na(+)(out) + NAD(+). In terms of biological role, NQR complex catalyzes the reduction of ubiquinone-1 to ubiquinol by two successive reactions, coupled with the transport of Na(+) ions from the cytoplasm to the periplasm. NqrA to NqrE are probably involved in the second step, the conversion of ubisemiquinone to ubiquinol. The protein is Na(+)-translocating NADH-quinone reductase subunit D of Vibrio anguillarum (Listonella anguillarum).